A 175-amino-acid chain; its full sequence is Large ribosomal subunit protein uL10 (175 aa).

It belongs to the universal ribosomal protein uL10 family. As to quaternary structure, part of the ribosomal stalk of the 50S ribosomal subunit. The N-terminus interacts with L11 and the large rRNA to form the base of the stalk. The C-terminus forms an elongated spine to which L12 dimers bind in a sequential fashion forming a multimeric L10(L12)X complex.

In terms of biological role, forms part of the ribosomal stalk, playing a central role in the interaction of the ribosome with GTP-bound translation factors. This chain is Large ribosomal subunit protein uL10, found in Picosynechococcus sp. (strain ATCC 27264 / PCC 7002 / PR-6) (Agmenellum quadruplicatum).